The chain runs to 159 residues: MSFRIGHGYDVHKFTSTKKNIILGGIEIPYEMGLEAHSDGDVLIHALCDAILGALCLGDIGKHFPDTDMEYKNTDSKFFLAEIKKMLDDKEYSISNIDCTIIAQAPKMLPHIEKMKACLASVLEIQINQINIKATTTEQLGFIGRKEGIATHVVCLLNR.

The a divalent metal cation site is built by Asp-10 and His-12. 4-CDP-2-C-methyl-D-erythritol 2-phosphate contacts are provided by residues 10 to 12 (DVH) and 37 to 38 (HS). His-45 lines the a divalent metal cation pocket. Residues 59 to 61 (DIG), 64 to 68 (FPDTD), 103 to 109 (AQAPKML), 135 to 138 (TTTE), Phe-142, and Arg-145 each bind 4-CDP-2-C-methyl-D-erythritol 2-phosphate.

This sequence belongs to the IspF family. As to quaternary structure, homotrimer. A divalent metal cation is required as a cofactor.

The enzyme catalyses 4-CDP-2-C-methyl-D-erythritol 2-phosphate = 2-C-methyl-D-erythritol 2,4-cyclic diphosphate + CMP. The protein operates within isoprenoid biosynthesis; isopentenyl diphosphate biosynthesis via DXP pathway; isopentenyl diphosphate from 1-deoxy-D-xylulose 5-phosphate: step 4/6. In terms of biological role, involved in the biosynthesis of isopentenyl diphosphate (IPP) and dimethylallyl diphosphate (DMAPP), two major building blocks of isoprenoid compounds. Catalyzes the conversion of 4-diphosphocytidyl-2-C-methyl-D-erythritol 2-phosphate (CDP-ME2P) to 2-C-methyl-D-erythritol 2,4-cyclodiphosphate (ME-CPP) with a corresponding release of cytidine 5-monophosphate (CMP). This Francisella philomiragia subsp. philomiragia (strain ATCC 25017 / CCUG 19701 / FSC 153 / O#319-036) protein is 2-C-methyl-D-erythritol 2,4-cyclodiphosphate synthase.